The sequence spans 419 residues: Gamma-glutamyl phosphate reductase (419 aa).

It belongs to the gamma-glutamyl phosphate reductase family.

The protein resides in the cytoplasm. The catalysed reaction is L-glutamate 5-semialdehyde + phosphate + NADP(+) = L-glutamyl 5-phosphate + NADPH + H(+). Its pathway is amino-acid biosynthesis; L-proline biosynthesis; L-glutamate 5-semialdehyde from L-glutamate: step 2/2. Functionally, catalyzes the NADPH-dependent reduction of L-glutamate 5-phosphate into L-glutamate 5-semialdehyde and phosphate. The product spontaneously undergoes cyclization to form 1-pyrroline-5-carboxylate. The sequence is that of Gamma-glutamyl phosphate reductase from Azobacteroides pseudotrichonymphae genomovar. CFP2.